The sequence spans 97 residues: Defective intron-associated endonuclease 3 (97 aa).

Functionally, this endonuclease is specific to the nrdB gene splice junction and is involved in intron homing. This chain is Defective intron-associated endonuclease 3 (ITEVIIIR), found in Escherichia coli (Bacteriophage T4).